A 46-amino-acid chain; its full sequence is Large ribosomal subunit protein bL36 (46 aa).

The protein belongs to the bacterial ribosomal protein bL36 family.

The polypeptide is Large ribosomal subunit protein bL36 (Klebsiella pneumoniae (strain 342)).